We begin with the raw amino-acid sequence, 229 residues long: 5'-methylthioadenosine/S-adenosylhomocysteine nucleosidase (229 aa).

Glu12 (proton acceptor) is an active-site residue. Substrate is bound by residues Gly78, Ile152, and 173-174; that span reads ME. Residue Asp197 is the Proton donor of the active site.

The protein belongs to the PNP/UDP phosphorylase family. MtnN subfamily.

It carries out the reaction S-adenosyl-L-homocysteine + H2O = S-(5-deoxy-D-ribos-5-yl)-L-homocysteine + adenine. The enzyme catalyses S-methyl-5'-thioadenosine + H2O = 5-(methylsulfanyl)-D-ribose + adenine. It catalyses the reaction 5'-deoxyadenosine + H2O = 5-deoxy-D-ribose + adenine. Its pathway is amino-acid biosynthesis; L-methionine biosynthesis via salvage pathway; S-methyl-5-thio-alpha-D-ribose 1-phosphate from S-methyl-5'-thioadenosine (hydrolase route): step 1/2. Catalyzes the irreversible cleavage of the glycosidic bond in both 5'-methylthioadenosine (MTA) and S-adenosylhomocysteine (SAH/AdoHcy) to adenine and the corresponding thioribose, 5'-methylthioribose and S-ribosylhomocysteine, respectively. Also cleaves 5'-deoxyadenosine, a toxic by-product of radical S-adenosylmethionine (SAM) enzymes, into 5-deoxyribose and adenine. The chain is 5'-methylthioadenosine/S-adenosylhomocysteine nucleosidase from Haemophilus influenzae (strain PittGG).